Reading from the N-terminus, the 1034-residue chain is Beta-galactosidase (1034 aa).

E481 functions as the Proton donor in the catalytic mechanism. The Nucleophile role is filled by E547.

Belongs to the glycosyl hydrolase 2 family.

It catalyses the reaction Hydrolysis of terminal non-reducing beta-D-galactose residues in beta-D-galactosides.. This is Beta-galactosidase (bgaM) from Priestia megaterium (strain DSM 319 / IMG 1521) (Bacillus megaterium).